Reading from the N-terminus, the 379-residue chain is L-lactate dehydrogenase (379 aa).

Residues 1-379 form the FMN hydroxy acid dehydrogenase domain; the sequence is MIISSSTDYR…ITSELLVREP (379 aa). A substrate-binding site is contributed by Tyr-24. FMN contacts are provided by Ser-106 and Gln-127. Tyr-129 serves as a coordination point for substrate. Thr-155 lines the FMN pocket. Arg-164 serves as a coordination point for substrate. Lys-251 is an FMN binding site. The Proton acceptor role is filled by His-275. Arg-278 contributes to the substrate binding site. 306-330 serves as a coordination point for FMN; the sequence is DSGIRSGLDVVRMIALGADAAMLGR.

The protein belongs to the FMN-dependent alpha-hydroxy acid dehydrogenase family. The cofactor is FMN.

The protein resides in the cell membrane. It catalyses the reaction (S)-lactate + A = pyruvate + AH2. In terms of biological role, catalyzes the conversion of L-lactate to pyruvate. Is coupled to the respiratory chain. This Alcaligenes faecalis protein is L-lactate dehydrogenase.